Reading from the N-terminus, the 215-residue chain is uncharacterized protein (215 aa).

This is an uncharacterized protein from Saccharomyces cerevisiae (strain ATCC 204508 / S288c) (Baker's yeast).